The primary structure comprises 364 residues: Aminomethyltransferase (364 aa).

The protein belongs to the GcvT family. As to quaternary structure, the glycine cleavage system is composed of four proteins: P, T, L and H.

The catalysed reaction is N(6)-[(R)-S(8)-aminomethyldihydrolipoyl]-L-lysyl-[protein] + (6S)-5,6,7,8-tetrahydrofolate = N(6)-[(R)-dihydrolipoyl]-L-lysyl-[protein] + (6R)-5,10-methylene-5,6,7,8-tetrahydrofolate + NH4(+). Its function is as follows. The glycine cleavage system catalyzes the degradation of glycine. The sequence is that of Aminomethyltransferase from Escherichia coli (strain SMS-3-5 / SECEC).